The sequence spans 150 residues: FAD synthase (150 aa).

ATP is bound by residues 10–11, 15–18, Asp97, and Tyr124; these read VF and HPGH.

It belongs to the archaeal FAD synthase family. As to quaternary structure, homodimer. The cofactor is a divalent metal cation.

The enzyme catalyses FMN + ATP + H(+) = FAD + diphosphate. It functions in the pathway cofactor biosynthesis; FAD biosynthesis; FAD from FMN: step 1/1. Its function is as follows. Catalyzes the transfer of the AMP portion of ATP to flavin mononucleotide (FMN) to produce flavin adenine dinucleotide (FAD) coenzyme. This Methanopyrus kandleri (strain AV19 / DSM 6324 / JCM 9639 / NBRC 100938) protein is FAD synthase.